The primary structure comprises 414 residues: Phosphoglycerate kinase (414 aa).

(2R)-3-phosphoglycerate contacts are provided by Val23, Asp24, Phe25, Asn26, Arg39, Ser62, His63, Gly65, and Arg66. At Tyr75 the chain carries Phosphotyrosine. Position 76 is a phosphoserine (Ser76). Residues Leu121 and Arg122 each contribute to the (2R)-3-phosphoglycerate site. Ser143 is subject to Phosphoserine. 2 residues coordinate (2R)-3-phosphoglycerate: His168 and Arg169. Phosphoserine is present on residues Ser172, Ser173, and Ser183. Gly211 provides a ligand contact to ADP. Residue Gly211 coordinates CDP. AMP is bound by residues Ala212 and Lys213. Ala212 contacts ATP. A Mg(2+)-binding site is contributed by Ala212. Mg(2+)-binding residues include Ala215 and Asp216. Residue Asp216 participates in CDP binding. Lys217 provides a ligand contact to AMP. Lys217 lines the ATP pocket. Gly235 contacts ADP. Gly235 serves as a coordination point for CDP. Gly236 is a binding site for AMP. Position 236 (Gly236) interacts with ATP. Ser253 and Ser260 each carry phosphoserine. The residue at position 299 (Thr299) is a Phosphothreonine. Gly310 contacts AMP. ATP is bound at residue Gly310. Phosphoserine is present on Ser328. CDP-binding residues include Gly335, Ala337, and Phe340. Phe340 is a binding site for ADP. Position 341 (Glu341) interacts with AMP. ATP is bound at residue Glu341. Position 351 is a phosphoserine (Ser351). Asp372 and Thr373 together coordinate ATP. Asp372 is a Mg(2+) binding site. Position 373 is a phosphothreonine (Thr373). Phosphoserine occurs at positions 387, 390, 412, and 413.

The protein belongs to the phosphoglycerate kinase family. Monomer. Requires Mg(2+) as cofactor.

The protein localises to the cytoplasm. It is found in the mitochondrion. The enzyme catalyses (2R)-3-phosphoglycerate + ATP = (2R)-3-phospho-glyceroyl phosphate + ADP. It functions in the pathway carbohydrate degradation; glycolysis; pyruvate from D-glyceraldehyde 3-phosphate: step 2/5. Functionally, catalyzes one of the two ATP producing reactions in the glycolytic pathway via the reversible conversion of 1,3-diphosphoglycerate to 3-phosphoglycerate. Both L- and D- forms of purine and pyrimidine nucleotides can be used as substrates, but the activity is much lower on pyrimidines. Negatively regulates the biosynthesis of acetyl-CoA from pyruvate in the mitochondrion. The chain is Phosphoglycerate kinase (pgk1) from Schizosaccharomyces pombe (strain 972 / ATCC 24843) (Fission yeast).